Consider the following 138-residue polypeptide: Putative nickel-responsive regulator (138 aa).

Ni(2+) is bound by residues H78, H89, H91, and C97.

Belongs to the transcriptional regulatory CopG/NikR family. Ni(2+) is required as a cofactor.

Its function is as follows. Transcriptional regulator. The sequence is that of Putative nickel-responsive regulator from Thermococcus onnurineus (strain NA1).